The following is a 510-amino-acid chain: Cobyric acid synthase (510 aa).

Residues cysteine 249–alanine 458 enclose the GATase cobBQ-type domain. The Nucleophile role is filled by cysteine 336. Histidine 450 is a catalytic residue.

It belongs to the CobB/CobQ family. CobQ subfamily.

It functions in the pathway cofactor biosynthesis; adenosylcobalamin biosynthesis. In terms of biological role, catalyzes amidations at positions B, D, E, and G on adenosylcobyrinic A,C-diamide. NH(2) groups are provided by glutamine, and one molecule of ATP is hydrogenolyzed for each amidation. The protein is Cobyric acid synthase of Shewanella oneidensis (strain ATCC 700550 / JCM 31522 / CIP 106686 / LMG 19005 / NCIMB 14063 / MR-1).